The primary structure comprises 355 residues: Uroporphyrinogen decarboxylase (355 aa).

Residues 27–31, Phe-46, Asp-78, Tyr-155, Ser-210, and His-328 contribute to the substrate site; that span reads RQAGR.

Belongs to the uroporphyrinogen decarboxylase family. Homodimer.

It localises to the cytoplasm. The catalysed reaction is uroporphyrinogen III + 4 H(+) = coproporphyrinogen III + 4 CO2. It functions in the pathway porphyrin-containing compound metabolism; protoporphyrin-IX biosynthesis; coproporphyrinogen-III from 5-aminolevulinate: step 4/4. Functionally, catalyzes the decarboxylation of four acetate groups of uroporphyrinogen-III to yield coproporphyrinogen-III. The protein is Uroporphyrinogen decarboxylase of Pseudomonas aeruginosa (strain ATCC 15692 / DSM 22644 / CIP 104116 / JCM 14847 / LMG 12228 / 1C / PRS 101 / PAO1).